We begin with the raw amino-acid sequence, 294 residues long: Tissue factor (294 aa).

The signal sequence occupies residues 1–28 (MAILVRPRLLAALAPTFLGCLLLQVIAG). Residues 29–251 (AGIPEKAFNL…TEQWKSFLGE (223 aa)) are Extracellular-facing. 2 N-linked (GlcNAc...) asparagine glycosylation sites follow: N37 and N57. C75 and C83 form a disulfide bridge. N169 and N200 each carry an N-linked (GlcNAc...) asparagine glycan. Cysteines 218 and 241 form a disulfide. Residues 245 to 247 (WKS) carry the WKS motif motif. The chain crosses the membrane as a helical span at residues 252–274 (TLIIVGAVVLLATIFIILLSISL). The S-palmitoyl cysteine moiety is linked to residue C275. Topologically, residues 275–294 (CKRRKNRAGQKGKNTPSRLA) are cytoplasmic.

This sequence belongs to the tissue factor family. As to quaternary structure, interacts with HSPE; the interaction, inhibited by heparin, promotes the generation of activated factor X and activates coagulation in the presence of activated factor VII.

It localises to the membrane. Initiates blood coagulation by forming a complex with circulating factor VII or VIIa. The [TF:VIIa] complex activates factors IX or X by specific limited proteolysis. TF plays a role in normal hemostasis by initiating the cell-surface assembly and propagation of the coagulation protease cascade. The polypeptide is Tissue factor (F3) (Mus musculus (Mouse)).